The following is a 415-amino-acid chain: Acetate kinase (415 aa).

N8 contacts Mg(2+). K15 provides a ligand contact to ATP. R106 contacts substrate. Catalysis depends on D163, which acts as the Proton donor/acceptor. Residues 222 to 226 (HLGNG), 296 to 298 (DLR), and 344 to 348 (GIGEN) contribute to the ATP site. Residue E397 participates in Mg(2+) binding.

The protein belongs to the acetokinase family. Homodimer. Requires Mg(2+) as cofactor. It depends on Mn(2+) as a cofactor.

Its subcellular location is the cytoplasm. The enzyme catalyses acetate + ATP = acetyl phosphate + ADP. It participates in metabolic intermediate biosynthesis; acetyl-CoA biosynthesis; acetyl-CoA from acetate: step 1/2. Functionally, catalyzes the formation of acetyl phosphate from acetate and ATP. Can also catalyze the reverse reaction. The protein is Acetate kinase of Thermosynechococcus vestitus (strain NIES-2133 / IAM M-273 / BP-1).